The following is a 313-amino-acid chain: D-alanine--D-alanine ligase (313 aa).

The ATP-grasp domain occupies 114-309; sequence KWLWKGVGLP…FSKLVLKLIS (196 aa). Residue 142-195 participates in ATP binding; sequence DLTFPVIVKPSHEGSSIGMRKVDTLDALQEAVDFAQQYDSEILIEQWITGREFT. Residues Asp263, Glu276, and Asn278 each coordinate Mg(2+).

It belongs to the D-alanine--D-alanine ligase family. Mg(2+) serves as cofactor. Mn(2+) is required as a cofactor.

It localises to the cytoplasm. It carries out the reaction 2 D-alanine + ATP = D-alanyl-D-alanine + ADP + phosphate + H(+). The protein operates within cell wall biogenesis; peptidoglycan biosynthesis. Cell wall formation. This chain is D-alanine--D-alanine ligase, found in Hydrogenovibrio crunogenus (strain DSM 25203 / XCL-2) (Thiomicrospira crunogena).